The chain runs to 226 residues: Uridylate kinase (226 aa).

Residue 6 to 10 (KISGK) coordinates ATP. A UMP-binding site is contributed by Gly43. ATP is bound by residues Gly44 and Arg48. Residues Asp65 and 113-119 (FQPGQST) contribute to the UMP site. Residues Thr139, Asn140, Tyr145, and Asp148 each coordinate ATP.

The protein belongs to the UMP kinase family. As to quaternary structure, homohexamer.

The protein localises to the cytoplasm. It catalyses the reaction UMP + ATP = UDP + ADP. Its pathway is pyrimidine metabolism; CTP biosynthesis via de novo pathway; UDP from UMP (UMPK route): step 1/1. With respect to regulation, inhibited by UTP. Catalyzes the reversible phosphorylation of UMP to UDP. The chain is Uridylate kinase from Saccharolobus islandicus (strain M.16.27) (Sulfolobus islandicus).